We begin with the raw amino-acid sequence, 309 residues long: MACKNPKKFFPIRKSPVLRDGAFKGKLVLVTGGGTGIGKAIATTFAHLRATVVIAARRMEKLEQTARDITKITGGTCEPFQMDIKDPGMVSDAFDKIDMKFGKVPEILVNNAAGNFIMATELLSSNAYGTIIDIVLKGTFNVTTELGKRCIQNKTGASITSITAGYARAGAPFIVPSAVSKAGVETMTKSLATEWSKYGLRFNAVSPGPIPTKGAWGRLNSGEMGDIAEKMKFLNPEGRVGSPEEVANLVAFISSDHMSFLNGAIIDLDGGQQHFNHGSHMGDFLHSWDHKNWEDAENLIRGRTGKEKA.

NADP(+)-binding positions include 28-60, 32-37, arginine 57, and aspartate 83; these read VLVTGGGTGIGKAIATTFAHLRATVVIAARRME and GGGTGI. Arginine 57 provides a ligand contact to substrate. 2 residues coordinate substrate: phenylalanine 116 and serine 124. Residue tyrosine 166 is the Proton acceptor of the active site. NADP(+) contacts are provided by residues lysine 181 and 207-210; that span reads PGPI. Arginine 218 serves as a coordination point for substrate.

The protein belongs to the short-chain dehydrogenases/reductases (SDR) family. 2,4-dienoyl-CoA reductase subfamily.

It carries out the reaction a (2E,4E)-dienoyl-CoA + NADPH + H(+) = a 4,5-saturated-(3E)-enoyl-CoA + NADP(+). The catalysed reaction is a (2E,4Z)-dienoyl-CoA + NADPH + H(+) = a 4,5-saturated-(3E)-enoyl-CoA + NADP(+). In terms of biological role, auxiliary enzyme of beta-oxidation. It participates in the metabolism of unsaturated fatty enoyl-CoA esters having double bonds in both even- and odd-numbered positions. Catalyzes the NADP-dependent reduction of 2,4-dienoyl-CoA to yield trans-3-enoyl-CoA. The sequence is that of Probable 2,4-dienoyl-CoA reductase decr-1.2 [(3E)-enoyl-CoA-producing] from Caenorhabditis elegans.